Consider the following 428-residue polypeptide: Putative ankyrin repeat protein FPV234 (428 aa).

8 ANK repeats span residues 6-35, 39-68, 71-100, 103-132, 137-169, 174-202, 206-238, and 242-271; these read KDDI…DPNV, YQYS…DPNI, FFTP…IVNL, YCLK…DINS, NGKY…DINK, TNTS…NINI, MGRN…DINA, and EGNT…YLSY.

This chain is Putative ankyrin repeat protein FPV234, found in Fowlpox virus (strain NVSL) (FPV).